Consider the following 92-residue polypeptide: Large ribosomal subunit protein eL43 (92 aa).

Positions 39, 42, 57, and 60 each coordinate Zn(2+). Residues 39–60 (CSFCGKTKMKRRAVGIWHCGSC) form a C4-type zinc finger.

It belongs to the eukaryotic ribosomal protein eL43 family. Component of the large ribosomal subunit.

The protein resides in the cytoplasm. Functionally, component of the large ribosomal subunit. The ribosome is a large ribonucleoprotein complex responsible for the synthesis of proteins in the cell. The protein is Large ribosomal subunit protein eL43 (rpl37a) of Ictalurus punctatus (Channel catfish).